A 270-amino-acid polypeptide reads, in one-letter code: Tryptophan 2,3-dioxygenase-like protein (270 aa).

This sequence belongs to the tryptophan 2,3-dioxygenase family.

In Xanthomonas campestris pv. campestris (strain 8004), this protein is Tryptophan 2,3-dioxygenase-like protein.